Here is a 97-residue protein sequence, read N- to C-terminus: YcgL domain-containing protein Avin_32960 (97 aa).

The 85-residue stretch at 3–87 (CICSIYKSPR…PEEEYVEHLP (85 aa)) folds into the YcgL domain.

The protein is YcgL domain-containing protein Avin_32960 of Azotobacter vinelandii (strain DJ / ATCC BAA-1303).